We begin with the raw amino-acid sequence, 43 residues long: Photosystem I reaction center subunit IX (43 aa).

Residues 7 to 27 (YLSVAPVLSALWFGALAGLLI) form a helical membrane-spanning segment.

This sequence belongs to the PsaJ family.

The protein resides in the plastid. It is found in the chloroplast thylakoid membrane. May help in the organization of the PsaE and PsaF subunits. The sequence is that of Photosystem I reaction center subunit IX from Oenothera argillicola (Appalachian evening primrose).